A 177-amino-acid polypeptide reads, in one-letter code: Large ribosomal subunit protein uL6 (177 aa).

Residues 157-171 (YKGKGVRYSDENVRR) show a composition bias toward basic and acidic residues. Residues 157–177 (YKGKGVRYSDENVRRKEAKKK) form a disordered region.

Belongs to the universal ribosomal protein uL6 family. As to quaternary structure, part of the 50S ribosomal subunit.

Its function is as follows. This protein binds to the 23S rRNA, and is important in its secondary structure. It is located near the subunit interface in the base of the L7/L12 stalk, and near the tRNA binding site of the peptidyltransferase center. This Pseudoalteromonas translucida (strain TAC 125) protein is Large ribosomal subunit protein uL6.